Reading from the N-terminus, the 320-residue chain is Zinc finger protein 330 (320 aa).

A disordered region spans residues 1–23; sequence MPKKKTGARKKAENRREREKQLR. The Nuclear localization signal signature appears at 3-11; it reads KKKTGARKK. Basic and acidic residues predominate over residues 10 to 22; sequence KKAENRREREKQL. C4-type zinc fingers lie at residues 42-58, 67-104, 129-149, and 175-189; these read CDKCQRRQKNRAFCYFC, CAQCGKTKCMMKSSDCVIKHAGVYSTGLAMVGAICDFC, CVECERGVWDHGGRIFSCSFC, and CVSCNRLGQHSCLRC. Disordered regions lie at residues 206-250 and 264-303; these read EKGK…ASGY and GASYHDEEEDEYEAEDDEEEEDEGGKDSDAESSDLFTNLN. Residues 216 to 225 show a composition bias toward basic and acidic residues; it reads CGHETQETKD. Acidic residues predominate over residues 269 to 287; it reads DEEEDEYEAEDDEEEEDEG. Ser291 bears the Phosphoserine mark.

Belongs to the NOA36 family.

Its subcellular location is the nucleus. The protein localises to the nucleolus. The protein resides in the chromosome. It localises to the centromere. This chain is Zinc finger protein 330 (ZNF330), found in Bos taurus (Bovine).